Here is a 469-residue protein sequence, read N- to C-terminus: Abscisic acid 8'-hydroxylase CYP707A2 (469 aa).

The helical transmembrane segment at F3–I23 threads the bilayer. Heme is bound at residue C414.

The protein belongs to the cytochrome P450 family. Heme serves as cofactor. In terms of tissue distribution, expressed at low levels in fruit.

Its subcellular location is the membrane. It carries out the reaction 2-cis-(+)-abscisate + reduced [NADPH--hemoprotein reductase] + O2 = (+)-8'-hydroxyabscisate + oxidized [NADPH--hemoprotein reductase] + H2O + H(+). Its pathway is plant hormone degradation; abscisic acid degradation. Negative regulator of fruit ripening involved in the oxidative degradation of abscisic acid (ABA). In Solanum lycopersicum (Tomato), this protein is Abscisic acid 8'-hydroxylase CYP707A2.